A 209-amino-acid polypeptide reads, in one-letter code: Ribosomal RNA large subunit methyltransferase E (209 aa).

Positions 63, 65, 83, 99, and 124 each coordinate S-adenosyl-L-methionine. Residue K164 is the Proton acceptor of the active site.

This sequence belongs to the class I-like SAM-binding methyltransferase superfamily. RNA methyltransferase RlmE family.

It localises to the cytoplasm. The catalysed reaction is uridine(2552) in 23S rRNA + S-adenosyl-L-methionine = 2'-O-methyluridine(2552) in 23S rRNA + S-adenosyl-L-homocysteine + H(+). Specifically methylates the uridine in position 2552 of 23S rRNA at the 2'-O position of the ribose in the fully assembled 50S ribosomal subunit. This Aeromonas hydrophila subsp. hydrophila (strain ATCC 7966 / DSM 30187 / BCRC 13018 / CCUG 14551 / JCM 1027 / KCTC 2358 / NCIMB 9240 / NCTC 8049) protein is Ribosomal RNA large subunit methyltransferase E.